A 428-amino-acid polypeptide reads, in one-letter code: Probable dual-specificity RNA methyltransferase RlmN 2 (428 aa).

The Proton acceptor role is filled by E142. A Radical SAM core domain is found at 148 to 414 (FAGRATACVS…STVRQRRGID (267 aa)). Residues C155 and C419 are joined by a disulfide bond. The [4Fe-4S] cluster site is built by C162, C166, and C169. Residues 207–228 (MRDPSPGREAGEKSRDEADRHR) are compositionally biased toward basic and acidic residues. Residues 207 to 232 (MRDPSPGREAGEKSRDEADRHRAPPT) form a disordered region. Residues 244-245 (GE), S276, 299-301 (SLH), and N375 each bind S-adenosyl-L-methionine. C419 acts as the S-methylcysteine intermediate in catalysis.

This sequence belongs to the radical SAM superfamily. RlmN family. It depends on [4Fe-4S] cluster as a cofactor.

The protein localises to the cytoplasm. It catalyses the reaction adenosine(2503) in 23S rRNA + 2 reduced [2Fe-2S]-[ferredoxin] + 2 S-adenosyl-L-methionine = 2-methyladenosine(2503) in 23S rRNA + 5'-deoxyadenosine + L-methionine + 2 oxidized [2Fe-2S]-[ferredoxin] + S-adenosyl-L-homocysteine. It carries out the reaction adenosine(37) in tRNA + 2 reduced [2Fe-2S]-[ferredoxin] + 2 S-adenosyl-L-methionine = 2-methyladenosine(37) in tRNA + 5'-deoxyadenosine + L-methionine + 2 oxidized [2Fe-2S]-[ferredoxin] + S-adenosyl-L-homocysteine. Specifically methylates position 2 of adenine 2503 in 23S rRNA and position 2 of adenine 37 in tRNAs. The sequence is that of Probable dual-specificity RNA methyltransferase RlmN 2 from Opitutus terrae (strain DSM 11246 / JCM 15787 / PB90-1).